Reading from the N-terminus, the 179-residue chain is MEQFHATTIVCVRRGNHVALGGDGQVTLGNIVIKGTARKIRRLYHDKVLAGFAGATADAFTLQERFEAKLEKHQGHLMRAAVELTRDWRTDRVLRRLEAMLIVADTEHTLVLTGNGDVLEPEHGLAAIGSGGAYAQSAALALLRNTELPPEAIVKQSLEIAGDLCIYTNQNHVIETLGA.

Residue Thr-7 is part of the active site. Residues Gly-162, Cys-165, and Thr-168 each coordinate Na(+).

This sequence belongs to the peptidase T1B family. HslV subfamily. As to quaternary structure, a double ring-shaped homohexamer of HslV is capped on each side by a ring-shaped HslU homohexamer. The assembly of the HslU/HslV complex is dependent on binding of ATP.

It localises to the cytoplasm. The catalysed reaction is ATP-dependent cleavage of peptide bonds with broad specificity.. With respect to regulation, allosterically activated by HslU binding. Protease subunit of a proteasome-like degradation complex believed to be a general protein degrading machinery. The protein is ATP-dependent protease subunit HslV of Bordetella bronchiseptica (strain ATCC BAA-588 / NCTC 13252 / RB50) (Alcaligenes bronchisepticus).